The sequence spans 315 residues: Pantothenate synthetase (315 aa).

45–52 (MGALHEGH) serves as a coordination point for ATP. Histidine 52 (proton donor) is an active-site residue. Glutamine 77 is a binding site for (R)-pantoate. Glutamine 77 is a binding site for beta-alanine. An ATP-binding site is contributed by 163 to 166 (GEKD). Glutamine 169 lines the (R)-pantoate pocket. Residues valine 192 and 200–203 (MSSR) each bind ATP.

It belongs to the pantothenate synthetase family. Homodimer.

The protein resides in the cytoplasm. The catalysed reaction is (R)-pantoate + beta-alanine + ATP = (R)-pantothenate + AMP + diphosphate + H(+). The protein operates within cofactor biosynthesis; (R)-pantothenate biosynthesis; (R)-pantothenate from (R)-pantoate and beta-alanine: step 1/1. Its function is as follows. Catalyzes the condensation of pantoate with beta-alanine in an ATP-dependent reaction via a pantoyl-adenylate intermediate. The polypeptide is Pantothenate synthetase (Mycobacterium ulcerans (strain Agy99)).